Reading from the N-terminus, the 123-residue chain is Homeobox protein CDX-1 (123 aa).

The segment at residues 5–64 (KDKYRVVYTDHQRLELEKEFHYSRYITIRRKSELAANLGLTERQVKIWFQNRRAKERKVN) is a DNA-binding region (homeobox). The segment at 8–29 (YRVVYTDHQRLELEKEFHYSRY) is interaction with DNA. An interaction with 5-mCpG DNA region spans residues 47–58 (RQVKIWFQNRRA). The span at 57-68 (RAKERKVNKKKQ) shows a compositional bias: basic residues. A disordered region spans residues 57 to 123 (RAKERKVNKK…PVPVKEEFLP (67 aa)).

Belongs to the Caudal homeobox family. In terms of tissue distribution, intestinal epithelium.

It localises to the nucleus. Plays a role in transcriptional regulation. Involved in activated KRAS-mediated transcriptional activation of PRKD1 in colorectal cancer (CRC) cells. Binds to the PRKD1 promoter in colorectal cancer (CRC) cells. Could play a role in the terminal differentiation of the intestine. Binds preferentially to methylated DNA. This chain is Homeobox protein CDX-1 (Cdx1), found in Rattus norvegicus (Rat).